A 412-amino-acid polypeptide reads, in one-letter code: Serine hydroxymethyltransferase (412 aa).

(6S)-5,6,7,8-tetrahydrofolate is bound by residues Leu117 and 121-123 (GHL). Lys226 carries the N6-(pyridoxal phosphate)lysine modification. 349–351 (SPF) contributes to the (6S)-5,6,7,8-tetrahydrofolate binding site.

This sequence belongs to the SHMT family. Homodimer. Pyridoxal 5'-phosphate serves as cofactor.

The protein resides in the cytoplasm. The catalysed reaction is (6R)-5,10-methylene-5,6,7,8-tetrahydrofolate + glycine + H2O = (6S)-5,6,7,8-tetrahydrofolate + L-serine. It participates in one-carbon metabolism; tetrahydrofolate interconversion. Its pathway is amino-acid biosynthesis; glycine biosynthesis; glycine from L-serine: step 1/1. Functionally, catalyzes the reversible interconversion of serine and glycine with tetrahydrofolate (THF) serving as the one-carbon carrier. This reaction serves as the major source of one-carbon groups required for the biosynthesis of purines, thymidylate, methionine, and other important biomolecules. Also exhibits THF-independent aldolase activity toward beta-hydroxyamino acids, producing glycine and aldehydes, via a retro-aldol mechanism. This Oleidesulfovibrio alaskensis (strain ATCC BAA-1058 / DSM 17464 / G20) (Desulfovibrio alaskensis) protein is Serine hydroxymethyltransferase.